The primary structure comprises 288 residues: 4-diphosphocytidyl-2-C-methyl-D-erythritol kinase (288 aa).

Residue Lys8 is part of the active site. 90-100 (PVGAGLAGGSS) contributes to the ATP binding site. Residue Asp132 is part of the active site.

This sequence belongs to the GHMP kinase family. IspE subfamily.

The catalysed reaction is 4-CDP-2-C-methyl-D-erythritol + ATP = 4-CDP-2-C-methyl-D-erythritol 2-phosphate + ADP + H(+). It functions in the pathway isoprenoid biosynthesis; isopentenyl diphosphate biosynthesis via DXP pathway; isopentenyl diphosphate from 1-deoxy-D-xylulose 5-phosphate: step 3/6. Its function is as follows. Catalyzes the phosphorylation of the position 2 hydroxy group of 4-diphosphocytidyl-2C-methyl-D-erythritol. This is 4-diphosphocytidyl-2-C-methyl-D-erythritol kinase from Chlamydia trachomatis serovar A (strain ATCC VR-571B / DSM 19440 / HAR-13).